An 84-amino-acid polypeptide reads, in one-letter code: Conotoxin Tx8.1 (84 aa).

An N-terminal signal peptide occupies residues 1 to 19 (LKMGAMFVLLLLFTLASSH). A propeptide spanning residues 20–44 (REGDIQARKTHLKSDFYRTLPRFAR) is cleaved from the precursor.

It belongs to the conotoxin S superfamily. In terms of processing, contains 5 disulfide bonds. In terms of tissue distribution, expressed by the venom duct.

It is found in the secreted. The polypeptide is Conotoxin Tx8.1 (Conus textile (Cloth-of-gold cone)).